We begin with the raw amino-acid sequence, 378 residues long: MVSWKGIYFVVALFLGSFFGSIFMLGPFLPLMFISPAWYRWITDRIVATWLTLPVALLEMVFGAKVVVTGDGFIPGERSVIIMNHRTRMDWMFLWNCLLRYSYLRLEKICLKSSLKSIPGFGWAMQVAAFIFIQRKWEDDKSHFENMLHYFCDIHEPLQLLIFPEGTDLTANTKARSNDFAEKNGLRKYEYVLHPRTTGFTFVVECLREGNNLDAIHDITVAYPQNIPQTEKHLLNGNFPKEIHFHVQRYPIETVPTSKEELQLWCQKRWEEKEERLRRFYEGGKCFDETGQSIIPPCKSELRVLAVKCISLLYWTVFPMGTFALLYLYSFARWYFAAMIIIFVAQQKIFGGLELIELACHQYFKKQQKHDDTKMKKK.

The next 2 helical transmembrane spans lie at 9 to 29 (FVVALFLGSFFGSIFMLGPFL) and 46 to 66 (IVATWLTLPVALLEMVFGAKV). Residues 85–90 (HRTRMD) carry the HXXXXD motif motif. A run of 2 helical transmembrane segments spans residues 302–322 (LRVLAVKCISLLYWTVFPMGT) and 336–358 (FAAMIIIFVAQQKIFGGLELIEL).

It belongs to the 1-acyl-sn-glycerol-3-phosphate acyltransferase family.

Its subcellular location is the endoplasmic reticulum membrane. It carries out the reaction a 1-acyl-sn-glycero-3-phosphate + an acyl-CoA = a 1,2-diacyl-sn-glycero-3-phosphate + CoA. The enzyme catalyses a 1-acyl-sn-glycero-3-phospho-(1D-myo-inositol) + an acyl-CoA = a 1,2-diacyl-sn-glycero-3-phospho-(1D-myo-inositol) + CoA. It catalyses the reaction 1-acyl-sn-glycero-3-phospho-(1'-sn-glycerol) + an acyl-CoA = a 1,2-diacyl-sn-glycero-3-phospho-(1'-sn-glycerol) + CoA. The catalysed reaction is 1-hexadecanoyl-sn-glycero-3-phosphate + (9Z)-octadecenoyl-CoA = 1-hexadecanoyl-2-(9Z-octadecenoyl)-sn-glycero-3-phosphate + CoA. It carries out the reaction 1-(9Z-octadecenoyl)-sn-glycero-3-phosphate + (9Z)-octadecenoyl-CoA = 1,2-di-(9Z-octadecenoyl)-sn-glycero-3-phosphate + CoA. The enzyme catalyses 1-(9Z,12Z)-octadecadienoyl-sn-glycero-3-phosphate + (9Z)-octadecenoyl-CoA = 1-(9Z,12Z)-octadecadienoyl-2-(9Z)-octadecenoyl-sn-glycero-3-phosphate + CoA. It catalyses the reaction 1-(9Z,12Z,15Z)-octadecatrienoyl-sn-glycero-3-phosphate + (9Z)-octadecenoyl-CoA = 1-(9Z,12Z,15Z)-octadecatrienoyl-2-(9Z)-octadecenoyl-sn-glycero-3-phosphate + CoA. The catalysed reaction is 1-(9Z-octadecenoyl)-sn-glycero-3-phosphate + hexadecanoyl-CoA = 1-(9Z)-octadecenoyl-2-hexadecanoyl-sn-glycero-3-phosphate + CoA. It carries out the reaction 1-(9Z-octadecenoyl)-sn-glycero-3-phosphate + octadecanoyl-CoA = 1-(9Z-octadecenoyl)-2-octadecanoyl-sn-glycero-3-phosphate + CoA. The enzyme catalyses 1-acyl-sn-glycero-3-phospho-(1'-sn-glycerol) + (9Z)-octadecenoyl-CoA = 1-acyl-2-(9Z-octadecenoyl)-sn-glycero-3-phospho-(1'-sn-glycerol) + CoA. It catalyses the reaction a 1-acyl-sn-glycero-3-phospho-(1D-myo-inositol) + (9Z)-octadecenoyl-CoA = a 1-acyl-2-(9Z-octadecenoyl)-sn-glycero-3-phospho-(1D-myo-inositol) + CoA. The catalysed reaction is 1-hexadecanoyl-sn-glycero-3-phospho-(1D-myo-inositol) + hexadecanoyl-CoA = 1,2-dihexadecanoyl-sn-glycero-3-phospho-(1D-myo-inositol) + CoA. It carries out the reaction 1-hexadecanoyl-sn-glycero-3-phospho-(1D-myo-inositol) + octadecanoyl-CoA = 1-hexadecanoyl-2-octadecanoyl-sn-glycero-3-phospho-(1D-myo-inositol) + CoA. The enzyme catalyses 1-hexadecanoyl-sn-glycero-3-phospho-(1D-myo-inositol) + (9Z)-octadecenoyl-CoA = 1-hexadecanoyl-2-(9Z-octadecenoyl)-sn-glycero-3-phospho-(1D-myo-inositol) + CoA. It catalyses the reaction 1-hexadecanoyl-sn-glycero-3-phospho-(1D-myo-inositol) + (9Z,12Z)-octadecadienoyl-CoA = 1-hexadecanoyl-2-(9Z,12Z-octadecadienoyl)-sn-glycero-3-phospho-(1D-myo-inositol) + CoA. The catalysed reaction is 1-hexadecanoyl-sn-glycero-3-phospho-(1D-myo-inositol) + (5Z,8Z,11Z,14Z)-eicosatetraenoyl-CoA = 1-hexadecanoyl-2-(5Z,8Z,11Z,14Z-eicosatetraenoyl)-sn-glycero-3-phospho-D-myo-inositol + CoA. It carries out the reaction 1-hexadecanoyl-sn-glycero-3-phospho-(1'-sn-glycerol) + hexadecanoyl-CoA = 1,2-dihexadecanoyl-sn-glycero-3-phospho-(1'-sn-glycerol) + CoA. The enzyme catalyses 1-hexadecanoyl-sn-glycero-3-phospho-(1'-sn-glycerol) + octadecanoyl-CoA = 1-hexadecanoyl-2-octadecanoyl-sn-glycero-3-phospho-(1'-sn-glycerol) + CoA. It catalyses the reaction 1-hexadecanoyl-sn-glycero-3-phospho-(1'-sn-glycerol) + (9Z)-octadecenoyl-CoA = 1-hexadecanoyl-2-(9Z-octadecenoyl)-sn-glycero-3-phospho-(1'-sn-glycerol) + CoA. The catalysed reaction is 1-hexadecanoyl-sn-glycero-3-phospho-(1'-sn-glycerol) + (9Z,12Z)-octadecadienoyl-CoA = 1-hexadecanoyl-2-(9Z,12Z-octadecadienoyl)-sn-glycero-3-phospho-(1'-sn-glycerol) + CoA. It carries out the reaction 1-tetradecanoyl-sn-glycero-3-phospho-(1'-sn-glycerol) + (9Z)-octadecenoyl-CoA = 1-tetradecanoyl-2-(9Z-octadecenoyl)-sn-glycero-3-phospho-(1'-sn-glycerol) + CoA. The enzyme catalyses 1-octadecanoyl-sn-glycero-3-phospho-(1'-sn-glycerol) + (9Z)-octadecenoyl-CoA = 1-octadecanoyl-2-(9Z-octadecenoyl)-sn-glycero-3-phospho-(1'-sn-glycerol) + CoA. It catalyses the reaction 1-(9Z-octadecenoyl)-sn-glycero-3-phospho-(1'-sn-glycerol) + (9Z)-octadecenoyl-CoA = 1,2-di-(9Z-octadecenoyl)-sn-glycero-3-phospho-(1'-sn-glycerol) + CoA. The catalysed reaction is 1-hexadecanoyl-sn-glycero-3-phospho-(1D-myo-inositol) + dodecanoyl-CoA = 1-hexadecanoyl-2-dodecanoyl-sn-glycero-3-phospho-(1D-myo-inositol) + CoA. It carries out the reaction 1',3'-bis-[1-acyl-sn-glycero-3-phospho]-glycerol + (9Z)-octadecenoyl-CoA = 1'-[1-acyl-2-(9Z)-octadecenoyl-sn-glycero-3-phospho],3'-[1-acyl,2-hydroxy-sn-glycero-3-phospho]-glycerol + CoA. The enzyme catalyses 1'-[1,2-diacyl-sn-glycero-3-phospho],3'-[1-acyl-sn-glycero-3-phospho]-glycerol + (9Z)-octadecenoyl-CoA = 1'-[1,2-diacyl-sn-glycero-3-phospho],3'-[1-acyl,2-(9Z)-octadecenoyl-sn-glycero-3-phospho]-glycerol + CoA. It catalyses the reaction 1'-[1,2-diacyl-sn-glycero-3-phospho],3'-[1-acyl-sn-glycero-3-phospho]-glycerol + (9Z,12Z)-octadecadienoyl-CoA = 1'-[1,2-diacyl-sn-glycero-3-phospho],3'-[1-acyl,2-(9Z,12Z)-octadecadienoyl-sn-glycero-3-phospho]-glycerol + CoA. The catalysed reaction is 1'-[1,2-diacyl-sn-glycero-3-phospho],3'-[1-acyl-sn-glycero-3-phospho]-glycerol + dodecanoyl-CoA = 1'-[1,2-diacyl-sn-glycero-3-phospho],3'-[1-acyl,2-dodecanoyl-sn-glycero-3-phospho]-glycerol + CoA. It carries out the reaction 1',3'-bis-[1-acyl-sn-glycero-3-phospho]-glycerol + dodecanoyl-CoA = 1'-[1-acyl-2-dodecanoyl-sn-glycero-3-phospho],3'-[1-acyl,2-hydroxy-sn-glycero-3-phospho]-glycerol + CoA. The enzyme catalyses a 1-acyl-sn-glycero-3-phosphate + (9Z)-octadecenoyl-CoA = a 1-acyl-2-(9Z-octadecenoyl)-sn-glycero-3-phosphate + CoA. It catalyses the reaction 1',3'-bis-[1-acyl-sn-glycero-3-phospho]-glycerol + (9Z,12Z)-octadecadienoyl-CoA = 1'-[1-acyl-2-(9Z,12Z)-octadecadienoyl-sn-glycero-3-phospho],3'-[1-acyl,2-hydroxy-sn-glycero-3-phospho]-glycerol + CoA. The catalysed reaction is 1',3'-bis-[1-acyl-sn-glycero-3-phospho]-glycerol + hexadecanoyl-CoA = 1'-[1-acyl-2-hexadecanoyl-sn-glycero-3-phospho],3'-[1-acyl,2-hydroxy-sn-glycero-3-phospho]-glycerol + CoA. It carries out the reaction 1',3'-bis-[1-acyl-sn-glycero-3-phospho]-glycerol + octadecanoyl-CoA = 1'-[1-acyl-2-octadecanoyl-sn-glycero-3-phospho],3'-[1-acyl,2-hydroxy-sn-glycero-3-phospho]-glycerol + CoA. The enzyme catalyses 1'-[1,2-diacyl-sn-glycero-3-phospho],3'-[1-acyl-sn-glycero-3-phospho]-glycerol + octanoyl-CoA = 1'-[1,2-diacyl-sn-glycero-3-phospho],3'-[1-acyl,2-octanoyl-sn-glycero-3-phospho]-glycerol + CoA. It catalyses the reaction 1',3'-bis-[1-acyl-sn-glycero-3-phospho]-glycerol + octanoyl-CoA = 1'-[1-acyl-2-octanoyl-sn-glycero-3-phospho],3'-[1-acyl,2-hydroxy-sn-glycero-3-phospho]-glycerol + CoA. The catalysed reaction is 1'-[1,2-diacyl-sn-glycero-3-phospho],3'-[1-acyl-sn-glycero-3-phospho]-glycerol + hexadecanoyl-CoA = 1'-[1,2-diacyl-sn-glycero-3-phospho],3'-[1-acyl,2-hexadecanoyl-sn-glycero-3-phospho]-glycerol + CoA. It carries out the reaction 1'-[1,2-diacyl-sn-glycero-3-phospho],3'-[1-acyl-sn-glycero-3-phospho]-glycerol + (5Z,8Z,11Z,14Z)-eicosatetraenoyl-CoA = 1'-[1,2-diacyl-sn-glycero-3-phospho],3'-[1-acyl,2-(5Z,8Z,11Z,14Z)-eicosatetraenoyl-sn-glycero-3-phospho]-glycerol + CoA. The enzyme catalyses 1',3'-bis-[1-acyl-sn-glycero-3-phospho]-glycerol + (5Z,8Z,11Z,14Z)-eicosatetraenoyl-CoA = 1'-[1-acyl-2-(5Z,8Z,11Z,14Z)-eicosatetraenoyl-sn-glycero-3-phospho],3'-[1-acyl,2-hydroxy-sn-glycero-3-phospho]-glycerol + CoA. It catalyses the reaction a 1-acyl-sn-glycero-3-phospho-(1D-myo-inositol) + octadecanoyl-CoA = a 1-acyl-2-octadecanoyl-sn-glycero-3-phospho-(1D-myo-inositol) + CoA. The catalysed reaction is a 2-acyl-sn-glycero-3-phospho-D-myo-inositol + octadecanoyl-CoA = 1-octadecanoyl-2-acyl-sn-glycero-3-phospho-1D-myo-inositol + CoA. It functions in the pathway phospholipid metabolism; CDP-diacylglycerol biosynthesis; CDP-diacylglycerol from sn-glycerol 3-phosphate: step 2/3. In terms of biological role, exhibits acyl-CoA:lysocardiolipin acyltransferase (ALCAT) activity; catalyzes the reacylation of lyso-cardiolipin to cardiolipin (CL), a key step in CL remodeling. Recognizes both monolysocardiolipin and dilysocardiolipin as substrates with a preference for linoleoyl-CoA and oleoyl-CoA as acyl donors. Also exhibits 1-acyl-sn-glycerol-3-phosphate acyltransferase activity (AGPAT) activity; converts 1-acyl-sn-glycerol-3- phosphate (lysophosphatidic acid or LPA) into 1,2-diacyl-sn-glycerol-3- phosphate (phosphatidic acid or PA) by incorporating an acyl moiety at the sn-2 position of the glycerol backbone. Possesses both lysophosphatidylinositol acyltransferase (LPIAT) and lysophosphatidylglycerol acyltransferase (LPGAT) activities. Required for establishment of the hematopoietic and endothelial lineages. The protein is Lysocardiolipin acyltransferase 1 (LCLAT1) of Gallus gallus (Chicken).